The primary structure comprises 313 residues: Protoheme IX farnesyltransferase (313 aa).

9 helical membrane-spanning segments follow: residues 35-55 (LVVF…HPVL), 56-76 (AATS…LNMW), 98-118 (VSSP…VATL), 120-140 (VLVN…YAVV), 153-173 (IVIG…AATG), 180-200 (IILF…LALF), 226-246 (ILLY…LGYF), 248-268 (AAYG…AFNV), and 292-312 (LFLL…AAMI).

This sequence belongs to the UbiA prenyltransferase family. Protoheme IX farnesyltransferase subfamily.

It localises to the cell inner membrane. It catalyses the reaction heme b + (2E,6E)-farnesyl diphosphate + H2O = Fe(II)-heme o + diphosphate. Its pathway is porphyrin-containing compound metabolism; heme O biosynthesis; heme O from protoheme: step 1/1. Its function is as follows. Converts heme B (protoheme IX) to heme O by substitution of the vinyl group on carbon 2 of heme B porphyrin ring with a hydroxyethyl farnesyl side group. The chain is Protoheme IX farnesyltransferase from Afipia carboxidovorans (strain ATCC 49405 / DSM 1227 / KCTC 32145 / OM5) (Oligotropha carboxidovorans).